A 372-amino-acid chain; its full sequence is Heat-inducible transcription repressor HrcA (372 aa).

Residues 300-334 (YGRSGAAGEPAGNDPVGEPETESETESQTNDTEPI) form a disordered region.

It belongs to the HrcA family.

Its function is as follows. Negative regulator of class I heat shock genes (grpE-dnaK-dnaJ and groELS operons). Prevents heat-shock induction of these operons. In Bifidobacterium longum (strain DJO10A), this protein is Heat-inducible transcription repressor HrcA.